We begin with the raw amino-acid sequence, 95 residues long: MLLTMNLQLFAHKKGGGSTSNGRDSESKRLGAKSADGQTVTGGSILYRQRGTKIYPGVNVGIGGDDTLFAKVDGVVRFERKGRDKKQVSVYPVAN.

Residues 1-10 constitute a propeptide that is removed on maturation; sequence MLLTMNLQLF. A disordered region spans residues 12–38; that stretch reads HKKGGGSTSNGRDSESKRLGAKSADGQ.

This sequence belongs to the bacterial ribosomal protein bL27 family. The N-terminus is cleaved by ribosomal processing cysteine protease Prp.

This Enterococcus faecalis (strain ATCC 700802 / V583) protein is Large ribosomal subunit protein bL27.